We begin with the raw amino-acid sequence, 107 residues long: Thioredoxin-1 (107 aa).

Residues 2–106 form the Thioredoxin domain; that stretch reads ASVRTMTDFH…LTNMMAKLVK (105 aa). Catalysis depends on nucleophile residues Cys-31 and Cys-34. Cys-31 and Cys-34 form a disulfide bridge.

This sequence belongs to the thioredoxin family.

The protein localises to the nucleus. Participates in various redox reactions through the reversible oxidation of its active center dithiol to a disulfide and catalyzes dithiol-disulfide exchange reactions. As a reducing substrate of peroxiredoxin 1, thioredoxin 2 is preferred over thioredoxin 1. Required for female meiosis and early embryonic development. This chain is Thioredoxin-1 (dhd), found in Drosophila yakuba (Fruit fly).